Here is a 507-residue protein sequence, read N- to C-terminus: Probable DNA ligase (507 aa).

An ATP-binding site is contributed by Glu209. Residue Lys211 is the N6-AMP-lysine intermediate of the active site. Residues Arg216, Arg231, Glu260, Phe300, Arg372, and Lys378 each coordinate ATP.

This sequence belongs to the ATP-dependent DNA ligase family. Mg(2+) is required as a cofactor.

The enzyme catalyses ATP + (deoxyribonucleotide)n-3'-hydroxyl + 5'-phospho-(deoxyribonucleotide)m = (deoxyribonucleotide)n+m + AMP + diphosphate.. Its function is as follows. DNA ligase that seals nicks in double-stranded DNA during DNA replication, DNA recombination and DNA repair. In Mycobacterium bovis (strain ATCC BAA-935 / AF2122/97), this protein is Probable DNA ligase.